Consider the following 399-residue polypeptide: Protein TWIN LOV 1 (399 aa).

The PAS 1 domain occupies 26–97 (LWIKEALEEL…MEIREAIREE (72 aa)). Positions 98-153 (RSVQVSLLNYRKSGSPFWMLFHMCPVFGKDDGKVTNFVAVQVPISGREHHRKKLRN) constitute a PAC 1 domain. The 72-residue stretch at 249-320 (SLVISLGRIK…EMKECILKGQ (72 aa)) folds into the PAS 2 domain. Cys296 is modified (S-4a-FMN cysteine). The region spanning 320–376 (QSCTVQILNYSNRKDKSSFWNLLHISPVRNASGKTAYFVGVQVEASCRNTEIKELRP) is the PAC 2 domain.

In terms of assembly, interacts with VTC2, VTC5 and BLH10. FMN binds covalently to cysteine after exposure to blue light and is reversed in the dark.

In Arabidopsis thaliana (Mouse-ear cress), this protein is Protein TWIN LOV 1 (TLP1).